The primary structure comprises 3394 residues: Protein PFC0760c (3394 aa).

Composition is skewed to low complexity over residues 471 to 508, 515 to 528, and 786 to 841; these read NNND…NYNN, NMNS…NNLH, and NNQN…NQNN. 8 disordered regions span residues 471-539, 779-844, 1038-1099, 1892-1918, 2648-2693, 2835-2909, 3000-3057, and 3107-3394; these read NNND…DENN, MSSN…NAGI, NKKK…NNDD, TTTT…NNND, KMDL…DNHL, AKNE…NSNN, VSVG…DVNT, and DYVN…NSEE. A compositionally biased stretch (basic and acidic residues) spans 1038 to 1097; the sequence is NKKKNNDGDNKSQEDDDGNKKKNNDGDNKSQEDDDGNKKKNNDGDNKSQEDDYGNKKKNN. Residues 2657–2671 show a composition bias toward acidic residues; that stretch reads GDDDDDDDDDDDDDN. Over residues 2672-2686 the composition is skewed to low complexity; the sequence is NNNNNNNNNNNNNNM. Residues 2836–2846 show a composition bias toward polar residues; sequence KNENYPVSTHY. Low complexity-rich tracts occupy residues 2855-2865 and 2872-2909; these read DNINNDNNNDN and NDNI…NSNN. 2 stretches are compositionally biased toward acidic residues: residues 3007–3047 and 3147–3257; these read DNND…EEKE and DDDE…DDND. Basic and acidic residues predominate over residues 3258–3292; the sequence is NDHNDDNNDEEKYSCHDDKNEHTNNDLLNIDHDNN. Positions 3300–3309 are enriched in polar residues; that stretch reads LYSTYNVSVS. Over residues 3310–3320 the composition is skewed to basic and acidic residues; the sequence is HNKDPSNKENE. Residues 3321–3330 are compositionally biased toward polar residues; it reads IQNLISIDSS. Positions 3331–3379 are enriched in acidic residues; it reads NENDENDENDENDENDENDENDENDENDENDENDEKDENDENDENDENF. Over residues 3385–3394 the composition is skewed to polar residues; that stretch reads GTLNEMNSEE.

This is Protein PFC0760c from Plasmodium falciparum (isolate 3D7).